Consider the following 202-residue polypeptide: GTP cyclohydrolase 1 (202 aa).

The Zn(2+) site is built by Cys-90, His-93, and Cys-163.

This sequence belongs to the GTP cyclohydrolase I family. Homomer.

The catalysed reaction is GTP + H2O = 7,8-dihydroneopterin 3'-triphosphate + formate + H(+). The protein operates within cofactor biosynthesis; 7,8-dihydroneopterin triphosphate biosynthesis; 7,8-dihydroneopterin triphosphate from GTP: step 1/1. In Mycobacterium ulcerans (strain Agy99), this protein is GTP cyclohydrolase 1.